The primary structure comprises 151 residues: Large ribosomal subunit protein eL8 (151 aa).

This sequence belongs to the eukaryotic ribosomal protein eL8 family. In terms of assembly, part of the 50S ribosomal subunit. Probably part of the RNase P complex.

It is found in the cytoplasm. In terms of biological role, multifunctional RNA-binding protein that recognizes the K-turn motif in ribosomal RNA, the RNA component of RNase P, box H/ACA, box C/D and box C'/D' sRNAs. This Pyrobaculum aerophilum (strain ATCC 51768 / DSM 7523 / JCM 9630 / CIP 104966 / NBRC 100827 / IM2) protein is Large ribosomal subunit protein eL8.